Consider the following 541-residue polypeptide: Cilia- and flagella-associated protein 97 (541 aa).

A phosphoserine mark is found at S8 and S19. Disordered regions lie at residues 28–47 (ESNS…GINK), 93–296 (ERKA…KQEN), 313–337 (RCVK…VLDA), 406–430 (LSRQ…PPKL), and 495–514 (HYSP…GLSC). Composition is skewed to basic and acidic residues over residues 35 to 47 (KQND…GINK), 93 to 107 (ERKA…HIEN), and 142 to 151 (RIPKIVKGED). Over residues 152-161 (DYYTDGEESS) the composition is skewed to acidic residues. At T155 the chain carries Phosphothreonine. Residues S160 and S161 each carry the phosphoserine modification. Residues 176 to 201 (SSNLKKNVSKKYSSSSLSSSSSRSNS) show a composition bias toward low complexity. Residues 207-218 (GSDRQRRSESHS) are compositionally biased toward basic and acidic residues. 2 stretches are compositionally biased toward polar residues: residues 219 to 232 (SGKC…SSPK) and 240 to 250 (KSSAQPSSTKQ). At S230 the chain carries Phosphoserine. Position 258 is a phosphoserine (S258). The segment covering 267–277 (PLSTPDVSPAQ) has biased composition (polar residues). The span at 287–296 (QKVKVKKQEN) shows a compositional bias: basic and acidic residues. Residues 382–459 (RKNYSFTREE…ALLKRLEAVK (78 aa)) are a coiled coil. Positions 503 to 513 (SRTSSATSGLS) are enriched in polar residues.

The protein belongs to the CFAP97 family. Highly expressed in testis with lower levels detected in other tissues including lung, heart and kidney.

This chain is Cilia- and flagella-associated protein 97, found in Mus musculus (Mouse).